A 276-amino-acid chain; its full sequence is Glutamate 5-kinase (276 aa).

An ATP-binding site is contributed by Lys-14. 3 residues coordinate substrate: Ser-54, Asp-141, and Asn-157. ATP is bound by residues Ser-177 to Asp-178 and Thr-219 to Lys-225.

The protein belongs to the glutamate 5-kinase family.

Its subcellular location is the cytoplasm. It carries out the reaction L-glutamate + ATP = L-glutamyl 5-phosphate + ADP. Its pathway is amino-acid biosynthesis; L-proline biosynthesis; L-glutamate 5-semialdehyde from L-glutamate: step 1/2. Catalyzes the transfer of a phosphate group to glutamate to form L-glutamate 5-phosphate. The chain is Glutamate 5-kinase from Listeria monocytogenes serotype 4a (strain HCC23).